Reading from the N-terminus, the 343-residue chain is MKALVKTQHGTGHFAVQEKPEPTPGKHQVKIKVKYTGVCGSDIHTYEGHYPVAAPVTLGHEFSGEIVELGEGVTGFNVGDRVTSETTYSICGKCSYCTSGDYNLCSHRKGLGNQQDGSFAKYVIARQESLHHLPAGVDDRSAAMTEPLACTHHAIAKTSINKGDLVVVTGPGPIGLLAAQVAKSHGGTVIITGLSNDQVRLKKAKEVGIDYAIDTQEVDIKELVSELTDGYGADVVLECSGAVPAAKQGIDLLRKKGQYAQVGLFAQPEIQFNFEKIIQKEISVVGSRSQKPADWEPALSLLNEKKVNAKTLVTHEYTISEWDKAYHAIKSGEAIKVLLTPID.

Residues 1-26 form a disordered region; that stretch reads MKALVKTQHGTGHFAVQEKPEPTPGK. The Zn(2+) site is built by Cys39, His60, and Glu61. Glu146 contacts substrate. NAD(+) contacts are provided by residues Ile174, Arg200, and 262-264; that span reads VGL.

Belongs to the zinc-containing alcohol dehydrogenase family. Homotetramer. The cofactor is Zn(2+).

It carries out the reaction keto-D-fructose + NADH + H(+) = D-sorbitol + NAD(+). The enzyme catalyses xylitol + NAD(+) = D-xylulose + NADH + H(+). The catalysed reaction is L-iditol + NAD(+) = keto-L-sorbose + NADH + H(+). Polyol dehydrogenase that catalyzes the NAD(+)-dependent oxidation of various sugar alcohols. Is active with D-sorbitol (D-glucitol), xylitol and L-iditol as substrates, leading to the C2-oxidized products D-fructose, D-xylulose and L-sorbose, respectively. The polypeptide is Sorbitol dehydrogenase (gutB) (Halalkalibacterium halodurans (strain ATCC BAA-125 / DSM 18197 / FERM 7344 / JCM 9153 / C-125) (Bacillus halodurans)).